The primary structure comprises 312 residues: Cytochrome c biogenesis protein CcsA (312 aa).

The next 8 membrane-spanning stretches (helical) occupy residues 18 to 38, 48 to 68, 73 to 93, 102 to 122, 148 to 168, 216 to 236, 250 to 267, and 279 to 299; these read LGIL…LALF, FFTI…WILS, ISNL…GQLL, IIPV…CFVL, VMLS…VLFI, SILV…IWAN, TWAF…HMRI, and FATS…FLGI.

The protein belongs to the CcmF/CycK/Ccl1/NrfE/CcsA family. May interact with ccs1.

Its subcellular location is the cellular thylakoid membrane. Functionally, required during biogenesis of c-type cytochromes (cytochrome c6 and cytochrome f) at the step of heme attachment. The sequence is that of Cytochrome c biogenesis protein CcsA from Prochlorococcus marinus (strain MIT 9515).